A 482-amino-acid chain; its full sequence is tRNA sulfurtransferase (482 aa).

The THUMP domain occupies 61 to 165 (LAIRDALTRI…DDRLLLIKGR (105 aa)). ATP contacts are provided by residues 183–184 (LI), Lys-265, Gly-287, and Gln-296. Residues Cys-344 and Cys-456 are joined by a disulfide bond. The region spanning 404 to 482 (FGPNDVILDI…GFENVKVYRP (79 aa)) is the Rhodanese domain. Cys-456 (cysteine persulfide intermediate) is an active-site residue.

It belongs to the ThiI family.

The protein resides in the cytoplasm. The catalysed reaction is [ThiI sulfur-carrier protein]-S-sulfanyl-L-cysteine + a uridine in tRNA + 2 reduced [2Fe-2S]-[ferredoxin] + ATP + H(+) = [ThiI sulfur-carrier protein]-L-cysteine + a 4-thiouridine in tRNA + 2 oxidized [2Fe-2S]-[ferredoxin] + AMP + diphosphate. It carries out the reaction [ThiS sulfur-carrier protein]-C-terminal Gly-Gly-AMP + S-sulfanyl-L-cysteinyl-[cysteine desulfurase] + AH2 = [ThiS sulfur-carrier protein]-C-terminal-Gly-aminoethanethioate + L-cysteinyl-[cysteine desulfurase] + A + AMP + 2 H(+). The protein operates within cofactor biosynthesis; thiamine diphosphate biosynthesis. Its function is as follows. Catalyzes the ATP-dependent transfer of a sulfur to tRNA to produce 4-thiouridine in position 8 of tRNAs, which functions as a near-UV photosensor. Also catalyzes the transfer of sulfur to the sulfur carrier protein ThiS, forming ThiS-thiocarboxylate. This is a step in the synthesis of thiazole, in the thiamine biosynthesis pathway. The sulfur is donated as persulfide by IscS. This is tRNA sulfurtransferase from Salmonella enteritidis PT4 (strain P125109).